A 362-amino-acid polypeptide reads, in one-letter code: Phosphoserine aminotransferase (362 aa).

Positions 9 and 42 each coordinate L-glutamate. Pyridoxal 5'-phosphate is bound by residues 76–77 (GR), Trp102, Thr153, Asp174, and Gln197. The residue at position 198 (Lys198) is an N6-(pyridoxal phosphate)lysine. Residue 239–240 (NT) participates in pyridoxal 5'-phosphate binding.

Belongs to the class-V pyridoxal-phosphate-dependent aminotransferase family. SerC subfamily. As to quaternary structure, homodimer. It depends on pyridoxal 5'-phosphate as a cofactor.

The protein localises to the cytoplasm. It carries out the reaction O-phospho-L-serine + 2-oxoglutarate = 3-phosphooxypyruvate + L-glutamate. It catalyses the reaction 4-(phosphooxy)-L-threonine + 2-oxoglutarate = (R)-3-hydroxy-2-oxo-4-phosphooxybutanoate + L-glutamate. It participates in amino-acid biosynthesis; L-serine biosynthesis; L-serine from 3-phospho-D-glycerate: step 2/3. Its pathway is cofactor biosynthesis; pyridoxine 5'-phosphate biosynthesis; pyridoxine 5'-phosphate from D-erythrose 4-phosphate: step 3/5. Catalyzes the reversible conversion of 3-phosphohydroxypyruvate to phosphoserine and of 3-hydroxy-2-oxo-4-phosphonooxybutanoate to phosphohydroxythreonine. This is Phosphoserine aminotransferase from Salmonella choleraesuis (strain SC-B67).